A 205-amino-acid chain; its full sequence is Nucleoside triphosphate pyrophosphatase (205 aa).

The Proton acceptor role is filled by Asp76.

The protein belongs to the Maf family. The cofactor is a divalent metal cation.

Its subcellular location is the cytoplasm. The catalysed reaction is a ribonucleoside 5'-triphosphate + H2O = a ribonucleoside 5'-phosphate + diphosphate + H(+). It catalyses the reaction a 2'-deoxyribonucleoside 5'-triphosphate + H2O = a 2'-deoxyribonucleoside 5'-phosphate + diphosphate + H(+). Functionally, nucleoside triphosphate pyrophosphatase. May have a dual role in cell division arrest and in preventing the incorporation of modified nucleotides into cellular nucleic acids. In Orientia tsutsugamushi (strain Boryong) (Rickettsia tsutsugamushi), this protein is Nucleoside triphosphate pyrophosphatase.